A 195-amino-acid chain; its full sequence is HTH-type transcriptional regulator BetI (195 aa).

Positions 8–68 (EIRRAQLIDA…ATMRHVLRDL (61 aa)) constitute an HTH tetR-type domain. Residues 31 to 50 (TLASVAQRASISTGIVSHYF) constitute a DNA-binding region (H-T-H motif).

The protein operates within amine and polyamine biosynthesis; betaine biosynthesis via choline pathway [regulation]. Repressor involved in the biosynthesis of the osmoprotectant glycine betaine. It represses transcription of the choline transporter BetT and the genes of BetAB involved in the synthesis of glycine betaine. In Paraburkholderia phytofirmans (strain DSM 17436 / LMG 22146 / PsJN) (Burkholderia phytofirmans), this protein is HTH-type transcriptional regulator BetI.